A 109-amino-acid polypeptide reads, in one-letter code: Aquaporin-2 (109 aa).

Topologically, residues 1–6 are cytoplasmic; the sequence is SIAFSR. Residues 7–27 traverse the membrane as a helical segment; that stretch reads AVFSEFLATLLFVFFGLGSAL. At 28-35 the chain is on the extracellular side; the sequence is NWPQALPS. A helical transmembrane segment spans residues 36-54; the sequence is VLQIAMAFGLAIGTLVQTL. The Cytoplasmic portion of the chain corresponds to 55 to 59; it reads GHISG. An intramembrane region (discontinuously helical) is located at residues 60-69; it reads AHINPAVTVA. The NPA 1 motif lies at 63–65; that stretch reads NPA. Over 70–80 the chain is Cytoplasmic; it reads CLVGCHVSFLR. The chain crosses the membrane as a helical span at residues 81 to 102; it reads ATFYLAAQLLGAVAGAALLHEL. The Extracellular portion of the chain corresponds to 103–109; the sequence is TPPDIRG.

The protein belongs to the MIP/aquaporin (TC 1.A.8) family. Homotetramer. Post-translationally, serine phosphorylation is necessary and sufficient for expression at the apical membrane. Endocytosis is not phosphorylation-dependent. In terms of processing, N-glycosylated.

It is found in the apical cell membrane. The protein resides in the basolateral cell membrane. It localises to the cell membrane. The protein localises to the cytoplasmic vesicle membrane. Its subcellular location is the golgi apparatus. It is found in the trans-Golgi network membrane. The enzyme catalyses H2O(in) = H2O(out). It carries out the reaction glycerol(in) = glycerol(out). Functionally, forms a water-specific channel that provides the plasma membranes of renal collecting duct with high permeability to water, thereby permitting water to move in the direction of an osmotic gradient. Plays an essential role in renal water homeostasis. Could also be permeable to glycerol. In Elephas maximus (Indian elephant), this protein is Aquaporin-2.